We begin with the raw amino-acid sequence, 324 residues long: Dehydrogenase/reductase SDR family member 7C-A (324 aa).

An N-terminal signal peptide occupies residues 1–17 (MAVPSVMVLPLLIVVFA). NAD(+) is bound at residue 41-65 (VITDAVSGMGSECARLFHAGGARLV). Residue Ser-178 participates in substrate binding. The Proton acceptor role is filled by Tyr-191.

This sequence belongs to the short-chain dehydrogenases/reductases (SDR) family.

The protein localises to the secreted. Its function is as follows. Putative oxidoreductase. In Danio rerio (Zebrafish), this protein is Dehydrogenase/reductase SDR family member 7C-A (dhrs7ca).